The primary structure comprises 495 residues: MERWWFNSMLFKKEFERRCGLNKSMGSLGPIENTNEDPNRKVKNIHSWRNRDNSSCSNVDYLFGVKDIRNFISDDTFLVSDRNGDSYSIYFDIENHIFEIDNDHSFLSELESSFYSYRNLSYLNNGFRGEDPYYNSYMYDTQYSWNNHINSCIDSYLQSQICIDTSIISGSENYGDSYIYRAICGGESRNSSENEGSSRRTRTKGSDLTIRESSNDLEVTQKYRHLWVQCENCYGLNYKKFFKSKMNICEQCGYHLKMSSSDRIELLIDPGTWDPMDEDMVSLDPIEFHSEEEPYKDRIDSYQRKTGLTEAVQTGIGQLNGIPVAIGVMDFQFMGGSMGSVVGEKITRLIERAANQILPLIIVCASGGARMQEGSLSLMQMAKISSALYDYQLNKKLFYVSILTSPTTGGVTASFGMLGDIIIAEPNAYIAFAGKRVIEQTLNKTVPEGSQAAEYLFQKGLFDLIVPRNLLKSVLSELFKLHAFFPLNQKSSKIK.

The tract at residues 188–208 (SRNSSENEGSSRRTRTKGSDL) is disordered. The CoA carboxyltransferase N-terminal domain maps to 226–495 (LWVQCENCYG…PLNQKSSKIK (270 aa)). Residues cysteine 230, cysteine 233, cysteine 249, and cysteine 252 each contribute to the Zn(2+) site. The C4-type zinc finger occupies 230-252 (CENCYGLNYKKFFKSKMNICEQC).

Belongs to the AccD/PCCB family. In terms of assembly, acetyl-CoA carboxylase is a heterohexamer composed of biotin carboxyl carrier protein, biotin carboxylase and 2 subunits each of ACCase subunit alpha and ACCase plastid-coded subunit beta (accD). Zn(2+) is required as a cofactor.

It localises to the plastid. The protein resides in the chloroplast stroma. It carries out the reaction N(6)-carboxybiotinyl-L-lysyl-[protein] + acetyl-CoA = N(6)-biotinyl-L-lysyl-[protein] + malonyl-CoA. The protein operates within lipid metabolism; malonyl-CoA biosynthesis; malonyl-CoA from acetyl-CoA: step 1/1. Component of the acetyl coenzyme A carboxylase (ACC) complex. Biotin carboxylase (BC) catalyzes the carboxylation of biotin on its carrier protein (BCCP) and then the CO(2) group is transferred by the transcarboxylase to acetyl-CoA to form malonyl-CoA. The sequence is that of Acetyl-coenzyme A carboxylase carboxyl transferase subunit beta, chloroplastic from Nicotiana tomentosiformis (Tobacco).